The primary structure comprises 274 residues: Imidazole glycerol phosphate synthase subunit HisF (274 aa).

Active-site residues include Asp-11 and Asp-134.

This sequence belongs to the HisA/HisF family. As to quaternary structure, heterodimer of HisH and HisF.

Its subcellular location is the cytoplasm. It catalyses the reaction 5-[(5-phospho-1-deoxy-D-ribulos-1-ylimino)methylamino]-1-(5-phospho-beta-D-ribosyl)imidazole-4-carboxamide + L-glutamine = D-erythro-1-(imidazol-4-yl)glycerol 3-phosphate + 5-amino-1-(5-phospho-beta-D-ribosyl)imidazole-4-carboxamide + L-glutamate + H(+). It functions in the pathway amino-acid biosynthesis; L-histidine biosynthesis; L-histidine from 5-phospho-alpha-D-ribose 1-diphosphate: step 5/9. IGPS catalyzes the conversion of PRFAR and glutamine to IGP, AICAR and glutamate. The HisF subunit catalyzes the cyclization activity that produces IGP and AICAR from PRFAR using the ammonia provided by the HisH subunit. This Methanobrevibacter smithii (strain ATCC 35061 / DSM 861 / OCM 144 / PS) protein is Imidazole glycerol phosphate synthase subunit HisF.